We begin with the raw amino-acid sequence, 349 residues long: Magnesium-protoporphyrin IX monomethyl ester [oxidative] cyclase (349 aa).

Low complexity predominate over residues 1-10; that stretch reads MTATTATAPT. The disordered stretch occupies residues 1-23; sequence MTATTATAPTMRGGGRNELPPHL.

It belongs to the AcsF family. The cofactor is Fe cation.

It carries out the reaction Mg-protoporphyrin IX 13-monomethyl ester + 3 NADPH + 3 O2 + 2 H(+) = 3,8-divinyl protochlorophyllide a + 3 NADP(+) + 5 H2O. It functions in the pathway porphyrin-containing compound metabolism; chlorophyll biosynthesis (light-independent). Its function is as follows. Catalyzes the formation of the isocyclic ring in chlorophyll biosynthesis. Mediates the cyclase reaction, which results in the formation of divinylprotochlorophyllide (Pchlide) characteristic of all chlorophylls from magnesium-protoporphyrin IX 13-monomethyl ester (MgPMME). This chain is Magnesium-protoporphyrin IX monomethyl ester [oxidative] cyclase, found in Prochlorococcus marinus (strain MIT 9313).